The chain runs to 217 residues: Zinc finger CCHC-type and RNA-binding motif-containing protein 1 (217 aa).

Residues 10 to 88 (STVYVSNLPF…RVIKASIAID (79 aa)) form the RRM domain. A CCHC-type zinc finger spans residues 105-122 (SKCYECGESGHLSYACPK). Residues 120–217 (CPKNMLGERE…YFSDEEELSD (98 aa)) are disordered. The span at 145–163 (PEEEIEEVEVSEEEGEDPA) shows a compositional bias: acidic residues. Ser-155, Ser-210, and Ser-216 each carry phosphoserine.

In terms of assembly, component of the U11/U12 snRNPs that are part of the U12-type spliceosome. Interacts with ZRSR1. As to expression, expressed at higher level in heart and testis, and at lower level in cerebellum. Weakly expressed at low level in liver.

The protein resides in the nucleus. Its subcellular location is the nucleoplasm. In Mus musculus (Mouse), this protein is Zinc finger CCHC-type and RNA-binding motif-containing protein 1 (Zcrb1).